Reading from the N-terminus, the 500-residue chain is Ribose import ATP-binding protein RbsA (500 aa).

2 ABC transporter domains span residues 3–239 and 246–493; these read IEMK…VGRE and DRTP…TGGV. 35–42 is an ATP binding site; that stretch reads GENGAGKS.

Belongs to the ABC transporter superfamily. Ribose importer (TC 3.A.1.2.1) family. In terms of assembly, the complex is composed of an ATP-binding protein (RbsA), two transmembrane proteins (RbsC) and a solute-binding protein (RbsB).

It is found in the cell membrane. The catalysed reaction is D-ribose(out) + ATP + H2O = D-ribose(in) + ADP + phosphate + H(+). In terms of biological role, part of the ABC transporter complex RbsABC involved in ribose import. Responsible for energy coupling to the transport system. In Lacticaseibacillus paracasei (strain ATCC 334 / BCRC 17002 / CCUG 31169 / CIP 107868 / KCTC 3260 / NRRL B-441) (Lactobacillus paracasei), this protein is Ribose import ATP-binding protein RbsA.